Reading from the N-terminus, the 151-residue chain is Large ribosomal subunit protein bL9 (151 aa).

This sequence belongs to the bacterial ribosomal protein bL9 family.

In terms of biological role, binds to the 23S rRNA. The polypeptide is Large ribosomal subunit protein bL9 (Rhodococcus opacus (strain B4)).